Here is a 477-residue protein sequence, read N- to C-terminus: Glycogen synthase (477 aa).

Residue Lys-15 coordinates ADP-alpha-D-glucose.

The protein belongs to the glycosyltransferase 1 family. Bacterial/plant glycogen synthase subfamily.

It catalyses the reaction [(1-&gt;4)-alpha-D-glucosyl](n) + ADP-alpha-D-glucose = [(1-&gt;4)-alpha-D-glucosyl](n+1) + ADP + H(+). It functions in the pathway glycan biosynthesis; glycogen biosynthesis. Synthesizes alpha-1,4-glucan chains using ADP-glucose. This chain is Glycogen synthase, found in Streptococcus pneumoniae serotype 2 (strain D39 / NCTC 7466).